The chain runs to 118 residues: HTH-type transcriptional regulator SarT (118 aa).

The segment at residues methionine 55–lysine 78 is a DNA-binding region (H-T-H motif).

It belongs to the SarA family.

It is found in the cytoplasm. Functionally, transcriptional regulator acting as an intermediary between major regulators SarA and agr and virulence genes. Represses alpha-hemolysin (hla) gene expression. The protein is HTH-type transcriptional regulator SarT (sarT) of Staphylococcus aureus (strain Mu50 / ATCC 700699).